The sequence spans 344 residues: Beta-1,4-galactosyltransferase 4 (344 aa).

Residues 1 to 12 (MGCNPPYLLSYR) are Cytoplasmic-facing. A helical; Signal-anchor for type II membrane protein transmembrane segment spans residues 13 to 38 (LRLLLLFTLCLTVLGWATSNYFVGAI). Topologically, residues 39 to 344 (QVIPRAKNFM…NITVDFWTAA (306 aa)) are lumenal. Cys77 and Cys118 are disulfide-bonded. Residues 129-133 (PHRNR), 168-170 (FNR), and 195-196 (VD) contribute to the UDP-alpha-D-galactose site. A disulfide bridge connects residues Cys189 and Cys208. Asp196 is a binding site for Mn(2+). Asn220 carries an N-linked (GlcNAc...) asparagine glycan. Residues Tyr224 and Trp256 each contribute to the UDP-alpha-D-galactose site. 258–261 (GEDD) provides a ligand contact to N-acetyl-D-glucosamine. His289 is a Mn(2+) binding site. 289–291 (HTR) provides a ligand contact to UDP-alpha-D-galactose. Arg301 contributes to the N-acetyl-D-glucosamine binding site. Asn335 is a glycosylation site (N-linked (GlcNAc...) asparagine).

It belongs to the glycosyltransferase 7 family. Interacts with SLC35A2/UGT1. Mn(2+) is required as a cofactor.

It localises to the golgi apparatus membrane. Its subcellular location is the secreted. It carries out the reaction N-acetyl-D-glucosamine + UDP-alpha-D-galactose = beta-D-galactosyl-(1-&gt;4)-N-acetyl-D-glucosamine + UDP + H(+). It catalyses the reaction a beta-D-GlcNAc-(1-&gt;3)-beta-D-Gal-(1-&gt;4)-beta-D-Glc-(1&lt;-&gt;1)-Cer(d18:1(4E)) + UDP-alpha-D-galactose = a neolactoside nLc4Cer(d18:1(4E)) + UDP + H(+). The enzyme catalyses 3-O-{beta-D-galactosyl-(1-&gt;3)-[6-O-sulfo-N-acetyl-beta-D-glucosaminyl-(1-&gt;6)]-N-acetyl-alpha-D-galactosaminyl}-L-seryl-[protein] + UDP-alpha-D-galactose = 3-O-{beta-D-galactosyl-(1-&gt;3)-[beta-D-galactosyl-(1-&gt;4)-6-O-sulfo-N-acetyl-beta-D-glucosaminyl-(1-&gt;6)]-N-acetyl-alpha-D-galactosaminyl}-L-seryl-[protein] + UDP + H(+). The catalysed reaction is 3-O-{beta-D-galactosyl-(1-&gt;3)-[6-O-sulfo-N-acetyl-beta-D-glucosaminyl-(1-&gt;6)]-N-acetyl-alpha-D-galactosaminyl}-L-threonyl-[protein] + UDP-alpha-D-galactose = 3-O-{beta-D-galactosyl-(1-&gt;3)-[beta-D-galactosyl-(1-&gt;4)-6-O-sulfo-N-acetyl-beta-D-glucosaminyl-(1-&gt;6)]-N-acetyl-alpha-D-galactosaminyl}-L-threonyl-[protein] + UDP + H(+). Its pathway is protein modification; protein glycosylation. It participates in glycolipid biosynthesis. Functionally, galactose (Gal) transferase involved in the synthesis of terminal N-acetyllactosamine (LacNac) unit present on glycan chains of glycoproteins and glycosphingolipids. Catalyzes the transfer of Gal residue via a beta1-&gt;4 linkage from UDP-Gal to the non-reducing terminal N-acetyl glucosamine 6-O-sulfate (6-O-sulfoGlcNAc) in the linearly growing chain of both N- and O-linked keratan sulfate proteoglycans. Cooperates with B3GNT7 N-acetyl glucosamine transferase and CHST6 and CHST1 sulfotransferases to construct and elongate mono- and disulfated disaccharide units [-&gt;3Galbeta1-&gt;4(6-sulfoGlcNAcbeta)1-&gt;] and [-&gt;3(6-sulfoGalbeta)1-&gt;4(6-sulfoGlcNAcbeta)1-&gt;] within keratan sulfate polymer. Transfers Gal residue via a beta1-&gt;4 linkage to terminal 6-O-sulfoGlcNAc within the LacNac unit of core 2 O-glycans forming 6-sulfo-sialyl-Lewis X (sLex). May contribute to the generation of sLex epitope on mucin-type glycoproteins that serve as ligands for SELL/L-selectin, a major regulator of leukocyte migration. In the biosynthesis pathway of neolacto-series glycosphingolipids, transfers Gal residue via a beta1-&gt;4 linkage to terminal GlcNAc of a lactotriaosylceramide (Lc3Cer) acceptor to form a neolactotetraosylceramide. In Rattus norvegicus (Rat), this protein is Beta-1,4-galactosyltransferase 4 (B4galt4).